We begin with the raw amino-acid sequence, 576 residues long: Peptidoglycan D,D-transpeptidase FtsI (576 aa).

A helical transmembrane segment spans residues 22-42; it reads ITILLSLIIITIILVLSRITF. Catalysis depends on serine 308, which acts as the Acyl-ester intermediate.

This sequence belongs to the transpeptidase family. FtsI subfamily.

It is found in the cell inner membrane. The enzyme catalyses Preferential cleavage: (Ac)2-L-Lys-D-Ala-|-D-Ala. Also transpeptidation of peptidyl-alanyl moieties that are N-acyl substituents of D-alanine.. Its pathway is cell wall biogenesis; peptidoglycan biosynthesis. Its function is as follows. Catalyzes cross-linking of the peptidoglycan cell wall at the division septum. The chain is Peptidoglycan D,D-transpeptidase FtsI from Buchnera aphidicola subsp. Baizongia pistaciae (strain Bp).